Reading from the N-terminus, the 407-residue chain is MEFSQHFQKLIDDMRLDGRYRTFAELERIAGEFPTALWHGPDGQARRVTVWCSNDYLGMGQNAEVLAAMHRSIDLSGAGTGGTRNISGTNRQHVALEAELADLHGKESALIFTSGWISNLAALGTLGKILPECAIFSDALNHNSMIEGIRRSGAERFIFHHNDPVHLDRLLSSVDPARPKIVAFESVYSMDGDIAPIAEICDVAERHGALTYLDEVHAVGLYGPRGGGISDRDGLADRVTIIEGTLAKAFGVMGGYVSGPSLLMDVIRSMSDSFIFTTSICPHLAAGALAAVRHVKAHPDERRRQAENAVRLKVLLQKAGLPVLDTPSHILPVMVGEAHLCRSISEALLARHAIYVQPINYPTVARGQERFRLTPTPFHTTSHMEALVEALLAVGRDLGWAMSRRAA.

The substrate site is built by Arg21 and Ser137. Pyridoxal 5'-phosphate-binding residues include Ser189, His217, and Thr245. The active site involves Lys248. N6-(pyridoxal phosphate)lysine is present on Lys248. Pyridoxal 5'-phosphate-binding residues include Thr277 and Thr278. Thr363 serves as a coordination point for substrate.

It belongs to the class-II pyridoxal-phosphate-dependent aminotransferase family. Homodimer. Pyridoxal 5'-phosphate is required as a cofactor.

It catalyses the reaction succinyl-CoA + glycine + H(+) = 5-aminolevulinate + CO2 + CoA. It participates in porphyrin-containing compound metabolism; protoporphyrin-IX biosynthesis; 5-aminolevulinate from glycine: step 1/1. The polypeptide is 5-aminolevulinate synthase 2 (hemT) (Cereibacter sphaeroides (strain ATCC 17023 / DSM 158 / JCM 6121 / CCUG 31486 / LMG 2827 / NBRC 12203 / NCIMB 8253 / ATH 2.4.1.) (Rhodobacter sphaeroides)).